The sequence spans 648 residues: Macrolide export ATP-binding/permease protein MacB (648 aa).

One can recognise an ABC transporter domain in the interval 5–243; that stretch reads LELKDIRRSY…AGGTEPVVNT (239 aa). ATP is bound at residue 41–48; the sequence is GASGSGKS. 4 consecutive transmembrane segments (helical) span residues 273–293, 523–543, 576–596, and 600–620; these read LLTMLGIIIGIASVVSIVVVG, LFLTLVAVISLVVGGIGVMNI, AVLVCLVGGALGITLSLLIAF, and LFLPGWEIGFSPLALLLAFLC.

Belongs to the ABC transporter superfamily. Macrolide exporter (TC 3.A.1.122) family. In terms of assembly, homodimer. Part of the tripartite efflux system MacAB-TolC, which is composed of an inner membrane transporter, MacB, a periplasmic membrane fusion protein, MacA, and an outer membrane component, TolC. The complex forms a large protein conduit and can translocate molecules across both the inner and outer membranes. Interacts with MacA.

Its subcellular location is the cell inner membrane. Its function is as follows. Part of the tripartite efflux system MacAB-TolC. MacB is a non-canonical ABC transporter that contains transmembrane domains (TMD), which form a pore in the inner membrane, and an ATP-binding domain (NBD), which is responsible for energy generation. Confers resistance against macrolides. The chain is Macrolide export ATP-binding/permease protein MacB from Shigella boydii serotype 4 (strain Sb227).